Consider the following 349-residue polypeptide: GMP reductase (349 aa).

Residue 108–131 (LDFFKIKKIFSLSSELKYICIDVA) participates in NADP(+) binding. 2 residues coordinate K(+): Gly-181 and Gly-183. The Thioimidate intermediate role is filled by Cys-186. Position 216–239 (216–239 (IISDGGCTVSGDIAKAFGGGADFV)) interacts with NADP(+).

This sequence belongs to the IMPDH/GMPR family. GuaC type 1 subfamily. Homotetramer.

It catalyses the reaction IMP + NH4(+) + NADP(+) = GMP + NADPH + 2 H(+). Catalyzes the irreversible NADPH-dependent deamination of GMP to IMP. It functions in the conversion of nucleobase, nucleoside and nucleotide derivatives of G to A nucleotides, and in maintaining the intracellular balance of A and G nucleotides. The protein is GMP reductase of Buchnera aphidicola subsp. Schizaphis graminum (strain Sg).